The sequence spans 537 residues: Lysosomal cobalamin transport escort protein LMBD1 (537 aa).

Over 1–7 the chain is Extracellular; that stretch reads MAAAAAD. A helical membrane pass occupies residues 8 to 28; it reads LVIGWCIFGLLLLAILAFCWV. Residues 29 to 47 are Cytoplasmic-facing; sequence YVRKYQSQRESEVVSTVTA. A helical membrane pass occupies residues 48–68; it reads IFSLAVALITSALLPVDIFLV. Over 69-97 the chain is Extracellular; sequence SYMKNQNGTFKDWANANVTVQIENTVLYG. Residues asparagine 75 and asparagine 85 are each glycosylated (N-linked (GlcNAc...) asparagine). Residues 98-118 traverse the membrane as a helical segment; it reads YYTLYSVILFCVFFWIPFVYF. Residues 119-141 are Cytoplasmic-facing; that stretch reads YYEEKDDDDTSKCTQVKTALKYT. The chain crosses the membrane as a helical span at residues 142–162; that stretch reads LGFVVICALLLLVGAFVPLNL. The Extracellular portion of the chain corresponds to 163–185; the sequence is PNNNNSTEWEKVKLLFEDLGTGQ. Asparagine 166 and asparagine 167 each carry an N-linked (GlcNAc...) asparagine glycan. A helical transmembrane segment spans residues 186–206; it reads GLAALSFSISSLTLIGMLAAI. The Cytoplasmic portion of the chain corresponds to 207–302; it reads TYTAYGMSAL…KFCGALRPLK (96 aa). The short motif at 229–232 is the YERL motif; mediates interaction with adapter protein complex 2 and is essential for its function in clathrin-mediated endocytosis of INSR element; that stretch reads YERL. Threonine 235 is modified (phosphothreonine). Residues 291 to 294 carry the WTKF motif; mediates interaction with adapter protein complex 2 and is essential for its function in clathrin-mediated endocytosis of INSR motif; it reads WTKF. A helical transmembrane segment spans residues 303–323; that stretch reads IIWGIFFILVALLFVISLFLS. The Extracellular portion of the chain corresponds to 324–361; that stretch reads NLDKALHSAGIDSGFIVFGTNLSNPLNMLLPLLQTVFP. Residue asparagine 344 is glycosylated (N-linked (GlcNAc...) asparagine). Residues 362–382 traverse the membrane as a helical segment; sequence LDYILITIIIMYFIFTSMAGI. Over 383 to 405 the chain is Cytoplasmic; sequence RNIGIWFFWIRLYKIRRGRTRPQ. A helical membrane pass occupies residues 406 to 426; that stretch reads ALLFLCMILLLIVLHTSYMIY. The Extracellular portion of the chain corresponds to 427-483; sequence SLAPQYVMYGSQNYLIESNITSDAHKGNSTLAVPKRCDADAPKDQCTVTRTYVFLHK. N-linked (GlcNAc...) asparagine glycans are attached at residues asparagine 445 and asparagine 454. Residues 484-504 form a helical membrane-spanning segment; it reads FWFFSAAYYFGNWAFLVVFLI. Residues 505 to 537 are Cytoplasmic-facing; the sequence is GLIVSCCKGKKSVIEGVDEDSDLSDDEPSAYSA. Serine 525 and serine 528 each carry phosphoserine.

The protein belongs to the LIMR family. LMBRD1 subfamily. Interacts with ABCD4; this interaction induces the translocation of ABCD4 from the endoplasmic reticulum to the lysosome. Interacts with ABCD4 and MMACHC; this interaction ensures the transport of cobalamin from the lysosome to the cytoplasm. Interacts with INSR, adapter protein complex 2 and clathrin heavy chain. N-glycosylated.

The protein localises to the endoplasmic reticulum membrane. It localises to the lysosome membrane. It is found in the cell membrane. Its subcellular location is the cytoplasmic vesicle. The protein resides in the clathrin-coated vesicle. Functionally, lysosomal membrane chaperone required to export cobalamin (vitamin B12) from the lysosome to the cytosol, allowing its conversion to cofactors. Targets ABCD4 transporter from the endoplasmic reticulum to the lysosome. Then forms a complex with lysosomal ABCD4 and cytoplasmic MMACHC to transport cobalamin across the lysosomal membrane. Acts as an adapter protein which plays an important role in mediating and regulating the internalization of the insulin receptor (INSR). Involved in clathrin-mediated endocytosis of INSR via its interaction with adapter protein complex 2. Essential for the initiation of gastrulation and early formation of mesoderm structures during embryogenesis. This chain is Lysosomal cobalamin transport escort protein LMBD1 (Lmbrd1), found in Rattus norvegicus (Rat).